The sequence spans 92 residues: UPF0235 protein CCA_00247 (92 aa).

The protein belongs to the UPF0235 family.

In Chlamydia caviae (strain ATCC VR-813 / DSM 19441 / 03DC25 / GPIC) (Chlamydophila caviae), this protein is UPF0235 protein CCA_00247.